Consider the following 345-residue polypeptide: L-threonine 3-dehydrogenase (345 aa).

Cys39 is a Zn(2+) binding site. Active-site charge relay system residues include Thr41 and His44. Positions 64, 65, 94, 97, 100, and 108 each coordinate Zn(2+). Residues Ile176, Asp196, Arg201, 263 to 265 (LGI), and 287 to 288 (VY) contribute to the NAD(+) site.

The protein belongs to the zinc-containing alcohol dehydrogenase family. In terms of assembly, homotetramer. It depends on Zn(2+) as a cofactor.

Its subcellular location is the cytoplasm. It catalyses the reaction L-threonine + NAD(+) = (2S)-2-amino-3-oxobutanoate + NADH + H(+). It functions in the pathway amino-acid degradation; L-threonine degradation via oxydo-reductase pathway; glycine from L-threonine: step 1/2. Catalyzes the NAD(+)-dependent oxidation of L-threonine to 2-amino-3-ketobutyrate. This is L-threonine 3-dehydrogenase from Anaeromyxobacter dehalogenans (strain 2CP-C).